Here is a 669-residue protein sequence, read N- to C-terminus: MEKIVPPAVRIEELRRILREHEYRYYVLSSPTIDDFEYDAMMKQLEELEREYPEWDSPDSPTHRVGSDKTEGFASVRHDRPMLSLSNTYNYDEIGDFYRRVSEGLQGAPFEIVAELKFDGLSISLIYEDGMLVRAVTRGDGIMGDDVTANVRTIRSVPLRLRGDDYPRMLEVRGEILLPFKEFDRINAQREAEGEPLFANPRNAASGTIKQLDPHIVAGRNLDAYFYYLYSDEPLAENHYDRLMQARQWGFKVSDAVTLCCSKEDVYAFIDRFDTERLTLPVATDGIVLKVNAPAQQDLLGFTAKSPRWAIAYKYQAERVRTRLQHVSYQVGRTGAVTPVANLDPVLISGTVVRRASLHNADFIAEKDLHEGDFVYVEKGGEIIPKIVGVDTDARSIDGRPIVFTVLCPDCATPLVREQGEAAYYCPNAEGCPQQQKGRLEHYCGRKAADINIGPETIELLYSRNMIRNVADFYALTEEQLLTLPGFKKRAAAKLLDSIEASKARPYQAILFGLGIRFVGETVAKKLAAVYPSIDALAAATSEELVQIDEIGERIAAAVLHFFSLRQNRELIERLRLAGVSLEAETVSVPVSARLAGKTVVISGTFEKYSRDEYKAMVEDNGGRMAGSVSSKTSFILAGSDMGPSKREKAEKLGVRLMSEEEFLRLIEE.

35–39 (DFEYD) lines the NAD(+) pocket. The interval 52-71 (YPEWDSPDSPTHRVGSDKTE) is disordered. The segment covering 61-71 (PTHRVGSDKTE) has biased composition (basic and acidic residues). Residues 84–85 (SL) and glutamate 115 each bind NAD(+). Lysine 117 acts as the N6-AMP-lysine intermediate in catalysis. NAD(+) contacts are provided by arginine 138, glutamate 175, lysine 290, and lysine 314. Positions 408, 411, 426, and 432 each coordinate Zn(2+). A BRCT domain is found at 590–669 (PVSARLAGKT…EEEFLRLIEE (80 aa)).

Belongs to the NAD-dependent DNA ligase family. LigA subfamily. Mg(2+) is required as a cofactor. Mn(2+) serves as cofactor.

It carries out the reaction NAD(+) + (deoxyribonucleotide)n-3'-hydroxyl + 5'-phospho-(deoxyribonucleotide)m = (deoxyribonucleotide)n+m + AMP + beta-nicotinamide D-nucleotide.. DNA ligase that catalyzes the formation of phosphodiester linkages between 5'-phosphoryl and 3'-hydroxyl groups in double-stranded DNA using NAD as a coenzyme and as the energy source for the reaction. It is essential for DNA replication and repair of damaged DNA. This chain is DNA ligase, found in Porphyromonas gingivalis (strain ATCC 33277 / DSM 20709 / CIP 103683 / JCM 12257 / NCTC 11834 / 2561).